We begin with the raw amino-acid sequence, 526 residues long: Meiotically up-regulated gene 99 protein, mitochondrial (526 aa).

Helical transmembrane passes span 398–418 (TLYT…LYFV) and 421–441 (FSLY…LYYL).

Its subcellular location is the mitochondrion membrane. Functionally, required for correct meiotic chromosome segregation. Appears to also have role in sporulation. This Schizosaccharomyces pombe (strain 972 / ATCC 24843) (Fission yeast) protein is Meiotically up-regulated gene 99 protein, mitochondrial (mug99).